Consider the following 372-residue polypeptide: Glutamate 5-kinase (372 aa).

Lysine 14 contacts ATP. The substrate site is built by serine 54, aspartate 141, and asparagine 153. Position 173 to 174 (173 to 174) interacts with ATP; sequence TD. One can recognise a PUA domain in the interval 280-358; the sequence is RGRVIIDAGA…SEIESVLGHL (79 aa).

Belongs to the glutamate 5-kinase family.

Its subcellular location is the cytoplasm. It carries out the reaction L-glutamate + ATP = L-glutamyl 5-phosphate + ADP. It functions in the pathway amino-acid biosynthesis; L-proline biosynthesis; L-glutamate 5-semialdehyde from L-glutamate: step 1/2. Catalyzes the transfer of a phosphate group to glutamate to form L-glutamate 5-phosphate. This is Glutamate 5-kinase from Cupriavidus metallidurans (strain ATCC 43123 / DSM 2839 / NBRC 102507 / CH34) (Ralstonia metallidurans).